The following is a 333-amino-acid chain: Tetraacyldisaccharide 4'-kinase (333 aa).

55–62 (TAGGNGKT) is an ATP binding site.

The protein belongs to the LpxK family.

The catalysed reaction is a lipid A disaccharide + ATP = a lipid IVA + ADP + H(+). It participates in glycolipid biosynthesis; lipid IV(A) biosynthesis; lipid IV(A) from (3R)-3-hydroxytetradecanoyl-[acyl-carrier-protein] and UDP-N-acetyl-alpha-D-glucosamine: step 6/6. Functionally, transfers the gamma-phosphate of ATP to the 4'-position of a tetraacyldisaccharide 1-phosphate intermediate (termed DS-1-P) to form tetraacyldisaccharide 1,4'-bis-phosphate (lipid IVA). In Pectobacterium atrosepticum (strain SCRI 1043 / ATCC BAA-672) (Erwinia carotovora subsp. atroseptica), this protein is Tetraacyldisaccharide 4'-kinase.